Here is a 142-residue protein sequence, read N- to C-terminus: Large ribosomal subunit protein bL17 (142 aa).

It belongs to the bacterial ribosomal protein bL17 family. Part of the 50S ribosomal subunit. Contacts protein L32.

In Chlamydia caviae (strain ATCC VR-813 / DSM 19441 / 03DC25 / GPIC) (Chlamydophila caviae), this protein is Large ribosomal subunit protein bL17.